Here is a 157-residue protein sequence, read N- to C-terminus: MPRRREVPKREILPDPKFGNVELSKFMNVIMEGGKKAVAERIIYGALDLISQKQPEKDALEVFVTAINNVKPMVEVKSRRVGGANYQVPVEVRPVRRLALSMRWIKEAARKRGEKSMAQRLANELMEATEGRGGAMKRRDEVHRMAEANKAFSHFRF.

This sequence belongs to the universal ribosomal protein uS7 family. Part of the 30S ribosomal subunit. Contacts proteins S9 and S11.

Functionally, one of the primary rRNA binding proteins, it binds directly to 16S rRNA where it nucleates assembly of the head domain of the 30S subunit. Is located at the subunit interface close to the decoding center, probably blocks exit of the E-site tRNA. The protein is Small ribosomal subunit protein uS7 of Acidovorax ebreus (strain TPSY) (Diaphorobacter sp. (strain TPSY)).